We begin with the raw amino-acid sequence, 819 residues long: Sulfate permease 2 (819 aa).

Residue Asn24 is glycosylated (N-linked (GlcNAc...) asparagine). The next 10 membrane-spanning stretches (helical) occupy residues 72 to 92 (YNLT…FVVV), 104 to 124 (LAPE…WAFA), 129 to 149 (ITIG…ANVQ), 172 to 192 (LLFL…IVAI), 194 to 214 (AFMT…LMGI), 273 to 293 (FFVS…VSWL), 328 to 348 (ILSA…IEHI), 365 to 385 (SQEL…GGYP), 454 to 474 (FWLT…VSIF), and 477 to 497 (IENG…WRIA). The STAS domain maps to 551-708 (ELQISTPWPG…ENHKGGVQEV (158 aa)). N-linked (GlcNAc...) asparagine glycosylation occurs at Asn581. Residues 726–766 (EAVPVGTSGSGSTDEKRPEGEGGATNGGMEKGSANGEDIST) are disordered. The segment covering 746-755 (EGGATNGGME) has biased composition (gly residues).

This sequence belongs to the SLC26A/SulP transporter (TC 2.A.53) family. Mainly found in mycelia.

It localises to the membrane. Functionally, uptake of sulfate into the cell. The sequence is that of Sulfate permease 2 (cys-14) from Neurospora crassa (strain ATCC 24698 / 74-OR23-1A / CBS 708.71 / DSM 1257 / FGSC 987).